The chain runs to 155 residues: HTH-type transcriptional repressor MdtR (155 aa).

One can recognise an HTH marR-type domain in the interval 4–140; the sequence is ADQLMSDIQL…AAHITAKLAQ (137 aa). A DNA-binding region (H-T-H motif) is located at residues 54 to 77; that stretch reads VSEIAERMEVKPSAVTLMADRLEQ.

Homodimer.

The protein resides in the cytoplasm. The binding of MdtR to the mdtRP promoter region is severely inhibited by adding excess concentrations of fusidic acid or novobiocin but not by actinomycin or streptomycin. Functionally, repressor of the multidrug resistance operon mdtRP. Acts by binding directly to the mdtRP promoter region, leading to the repression of its expression. In Bacillus subtilis (strain 168), this protein is HTH-type transcriptional repressor MdtR.